The primary structure comprises 1819 residues: Non-reducing polyketide synthase nscA (1819 aa).

Residues 25–277 are N-terminal acylcarrier protein transacylase domain (SAT); the sequence is RRLDQHSKDR…PLPVYDGLCH (253 aa). Residues 413–846 form the Ketosynthase family 3 (KS3) domain; it reads SSKLAIVGMA…GGNTTLLLED (434 aa). Active-site for beta-ketoacyl synthase activity residues include cysteine 586, histidine 721, and histidine 764. Positions 952 to 1249 are malonyl-CoA:ACP transacylase (MAT) domain; sequence FTSQGAYYHG…MIPSAPAMSS (298 aa). The tract at residues 1339-1658 is product template (PT) domain; the sequence is TSLVHQITAE…RLLMDRFFSP (320 aa). The interval 1343–1479 is N-terminal hotdog fold; the sequence is HQITAETVEA…AMIRFEDPMA (137 aa). The region spanning 1343 to 1653 is the PKS/mFAS DH domain; sequence HQITAETVEA…IRRVPRLLMD (311 aa). Histidine 1375 functions as the Proton acceptor; for dehydratase activity in the catalytic mechanism. A C-terminal hotdog fold region spans residues 1507–1653; that stretch reads ASRLSKPLAY…IRRVPRLLMD (147 aa). Aspartate 1564 (proton donor; for dehydratase activity) is an active-site residue. Residues 1703 to 1742 are disordered; it reads SSTMASKAPEPAPLLATSSESSTPKESPIVTPAESEREDP. The segment covering 1719–1730 has biased composition (low complexity); that stretch reads TSSESSTPKESP. The Carrier domain maps to 1742 to 1819; it reads PVDNNMISQC…EMTAWIEEYC (78 aa). Serine 1779 is subject to O-(pantetheine 4'-phosphoryl)serine.

The cofactor is pantetheine 4'-phosphate.

Its pathway is secondary metabolite biosynthesis. Its function is as follows. Non-reducing polyketide synthase; part of the gene cluster that mediates the biosynthesis of neosartoricin B, a prenylated anthracenone that probably exhibits T-cell antiproliferative activity, suggestive of a physiological role as an immunosuppressive agent. The non-reducing polyketide synthase nscA probably synthesizes and cyclizes the decaketide backbone. The hydrolase nscB then mediates the product release through hydrolysis followed by spontaneous decarboxylation. The prenyltransferase nscD catalyzes the addition of the dimethylallyl group to the aromatic C5. The FAD-dependent monooxygenase nscC is then responsible for the stereospecific hydroxylation at C2. Neosartoricin B can be converted into two additional compounds neosartoricins C and D. Neosartoricin C is a spirocyclic compound that is cyclized through the attack of C3 hydroxyl on C14, followed by dehydration. On the other hand, neosartoricin D is a further cyclized compound in which attack of C2 on C14 in neosartoricin C results in the formation of the acetal-containing dioxabicyclo-octanone ring. Both of these compounds are novel and possibly represent related metabolites of the gene cluster. The polypeptide is Non-reducing polyketide synthase nscA (Trichophyton verrucosum (strain HKI 0517)).